The following is a 325-amino-acid chain: Acetyl-coenzyme A carboxylase carboxyl transferase subunit alpha (325 aa).

The region spanning 43–297 is the CoA carboxyltransferase C-terminal domain; that stretch reads ELENNSTQLR…KTSLIAHLRQ (255 aa).

Belongs to the AccA family. Acetyl-CoA carboxylase is a heterohexamer composed of biotin carboxyl carrier protein (AccB), biotin carboxylase (AccC) and two subunits each of ACCase subunit alpha (AccA) and ACCase subunit beta (AccD).

It is found in the cytoplasm. The catalysed reaction is N(6)-carboxybiotinyl-L-lysyl-[protein] + acetyl-CoA = N(6)-biotinyl-L-lysyl-[protein] + malonyl-CoA. Its pathway is lipid metabolism; malonyl-CoA biosynthesis; malonyl-CoA from acetyl-CoA: step 1/1. Functionally, component of the acetyl coenzyme A carboxylase (ACC) complex. First, biotin carboxylase catalyzes the carboxylation of biotin on its carrier protein (BCCP) and then the CO(2) group is transferred by the carboxyltransferase to acetyl-CoA to form malonyl-CoA. This chain is Acetyl-coenzyme A carboxylase carboxyl transferase subunit alpha, found in Cyanothece sp. (strain PCC 7425 / ATCC 29141).